The following is a 148-amino-acid chain: Deoxyuridine 5'-triphosphate nucleotidohydrolase (148 aa).

Residues 67–69 (RSG), asparagine 80, 84–86 (LID), and methionine 94 each bind substrate.

Belongs to the dUTPase family. Mg(2+) is required as a cofactor.

The enzyme catalyses dUTP + H2O = dUMP + diphosphate + H(+). It functions in the pathway pyrimidine metabolism; dUMP biosynthesis; dUMP from dCTP (dUTP route): step 2/2. In terms of biological role, this enzyme is involved in nucleotide metabolism: it produces dUMP, the immediate precursor of thymidine nucleotides and it decreases the intracellular concentration of dUTP so that uracil cannot be incorporated into DNA. In Ralstonia nicotianae (strain ATCC BAA-1114 / GMI1000) (Ralstonia solanacearum), this protein is Deoxyuridine 5'-triphosphate nucleotidohydrolase.